Consider the following 410-residue polypeptide: 2-oxoglutarate-dependent dioxygenase AOP3 (410 aa).

The Fe2OG dioxygenase domain occupies 258 to 355 (GNASVGAKEA…RYAAALFSNP (98 aa)). 3 residues coordinate Fe cation: histidine 278, aspartate 280, and histidine 335. Arginine 346 serves as a coordination point for 2-oxoglutarate.

The protein belongs to the iron/ascorbate-dependent oxidoreductase family. Fe(2+) serves as cofactor.

In terms of biological role, 2-oxoglutarate-dependent dioxygenase involved in glucosinolates biosynthesis. Catalyzes the conversion of methylsulfinylalkyl glucosinolates to hydroxyalkyl glucosinolates. The protein is 2-oxoglutarate-dependent dioxygenase AOP3 (AOP3) of Arabidopsis thaliana (Mouse-ear cress).